Here is a 146-residue protein sequence, read N- to C-terminus: uncharacterized protein (146 aa).

The helical transmembrane segment at 7 to 27 (FVLSITIVLVILIIIAFIWYN) threads the bilayer.

This sequence belongs to the asfivirus E146L family.

It localises to the host membrane. It is found in the virion. This is an uncharacterized protein from Ornithodoros (relapsing fever ticks).